The following is a 303-amino-acid chain: N-acetyl-D-glucosamine kinase (303 aa).

Residues 4–11 (GFDIGGTK) and 133–140 (GVGGGLVL) contribute to the ATP site. 4 residues coordinate Zn(2+): His-157, Cys-177, Cys-179, and Cys-184.

The protein belongs to the ROK (NagC/XylR) family. NagK subfamily.

It carries out the reaction N-acetyl-D-glucosamine + ATP = N-acetyl-D-glucosamine 6-phosphate + ADP + H(+). Its pathway is cell wall biogenesis; peptidoglycan recycling. Catalyzes the phosphorylation of N-acetyl-D-glucosamine (GlcNAc) derived from cell-wall degradation, yielding GlcNAc-6-P. The polypeptide is N-acetyl-D-glucosamine kinase (Salmonella newport (strain SL254)).